We begin with the raw amino-acid sequence, 298 residues long: Nucleoid occlusion protein (298 aa).

Positions 152–171 (EALAQRLGKGQSTVANKLRL) form a DNA-binding region, H-T-H motif.

This sequence belongs to the ParB family.

It is found in the cytoplasm. The protein resides in the nucleoid. Its function is as follows. Effects nucleoid occlusion by binding relatively nonspecifically to DNA and preventing the assembly of the division machinery in the vicinity of the nucleoid, especially under conditions that disturb the cell cycle. It helps to coordinate cell division and chromosome segregation by preventing the formation of the Z ring through the nucleoid, which would cause chromosome breakage. The chain is Nucleoid occlusion protein from Lysinibacillus sphaericus (strain C3-41).